A 557-amino-acid polypeptide reads, in one-letter code: Formate--tetrahydrofolate ligase (557 aa).

66 to 73 contacts ATP; the sequence is TPAGEGKS.

It belongs to the formate--tetrahydrofolate ligase family.

The catalysed reaction is (6S)-5,6,7,8-tetrahydrofolate + formate + ATP = (6R)-10-formyltetrahydrofolate + ADP + phosphate. It functions in the pathway one-carbon metabolism; tetrahydrofolate interconversion. The protein is Formate--tetrahydrofolate ligase of Clostridium botulinum (strain Loch Maree / Type A3).